The following is a 918-amino-acid chain: Serine/threonine-protein kinase D1 (918 aa).

Residue Tyr93 is modified to Phosphotyrosine. A Phorbol-ester/DAG-type 1 zinc finger spans residues 144–194 (PHALFVHSYRAPAFCDHCGEMLWGLVRQGLKCEGCGLNYHKRCAFKIPNNC). 4 positions are modified to phosphoserine: Ser203, Ser206, Ser217, and Ser221. A Phorbol-ester/DAG-type 2 zinc finger spans residues 276 to 326 (PHTFVIHSYTRPTVCQFCKKLLKGLFRQGLQCKDCRFNCHKRCAPKVPNNC). Disordered regions lie at residues 338–362 (SPGA…NSGL) and 380–408 (EGQS…STSN). Acidic residues-rich tracts occupy residues 345-355 (VVMEEGSDDND) and 387-396 (EMQDPDADQE). A Phosphoserine modification is found at Ser351. Phosphoserine; by MAPK13 occurs at positions 403 and 407. The PH domain maps to 428 to 547 (TVMKEGWMVH…WEVAIQHALM (120 aa)). The residue at position 438 (Tyr438) is a Phosphotyrosine. Position 454 is a phosphoserine (Ser454). Tyr469 carries the post-translational modification Phosphotyrosine; by ABL. Tyr508 is subject to Phosphotyrosine. The residue at position 554 (Ser554) is a Phosphoserine. In terms of domain architecture, Protein kinase spans 589–845 (IFPDEVLGSG…VDKTLSHPWL (257 aa)). Residues 595–603 (LGSGQFGIV) and Lys618 contribute to the ATP site. Asp712 (proton acceptor) is an active-site residue. Ser744 carries the phosphoserine; by PKC/PRKCD modification. Ser748 is subject to Phosphoserine; by autocatalysis and PKC/PRKCD. Tyr755 is subject to Phosphotyrosine. Ser916 is subject to Phosphoserine; by autocatalysis.

The protein belongs to the protein kinase superfamily. CAMK Ser/Thr protein kinase family. PKD subfamily. As to quaternary structure, interacts (via N-terminus) with ADAP1/CENTA1. Interacts with MAPK13. Interacts with DAPK1 in an oxidative stress-regulated manner. Interacts with USP28; the interaction induces phosphorylation of USP28 and activated KRAS-mediated stabilization of ZNF304. Interacts with AKAP13 (via C-terminal domain). The cofactor is Mg(2+). Post-translationally, phosphorylated at Ser-403 and Ser-407 by MAPK13 during regulation of insulin secretion in pancreatic beta cells. Phosphorylated by DAPK1. Phosphorylated at Tyr-93 and by ABL at Tyr-469, which primes the kinase in response to oxidative stress, and promotes a second step activating phosphorylation at Ser-744/Ser-748 by PKRD. Phosphorylated on Ser-916 upon S.enterica infection in macrophages.

Its subcellular location is the cytoplasm. The protein resides in the cell membrane. It localises to the golgi apparatus. It is found in the trans-Golgi network. The catalysed reaction is L-seryl-[protein] + ATP = O-phospho-L-seryl-[protein] + ADP + H(+). It carries out the reaction L-threonyl-[protein] + ATP = O-phospho-L-threonyl-[protein] + ADP + H(+). With respect to regulation, activated by DAG and phorbol esters. Phorbol-ester/DAG-type domain 1 binds DAG with high affinity and appears to play the dominant role in mediating translocation to the cell membrane and trans-Golgi network. Phorbol-ester/DAG-type domain 2 binds phorbol ester with higher affinity. Autophosphorylation of Ser-748 and phosphorylation of Ser-744 by PKC relieves auto-inhibition by the PH domain. Phosphorylation on Tyr-469 by the SRC-ABL1 pathway in response to oxidative stress, is also required for activation. Activated by DAPK1 under oxidative stress. Serine/threonine-protein kinase that converts transient diacylglycerol (DAG) signals into prolonged physiological effects downstream of PKC, and is involved in the regulation of MAPK8/JNK1 and Ras signaling, Golgi membrane integrity and trafficking, cell survival through NF-kappa-B activation, cell migration, cell differentiation by mediating HDAC7 nuclear export, cell proliferation via MAPK1/3 (ERK1/2) signaling, and plays a role in cardiac hypertrophy, VEGFA-induced angiogenesis, genotoxic-induced apoptosis and flagellin-stimulated inflammatory response. Phosphorylates the epidermal growth factor receptor (EGFR) on dual threonine residues, which leads to the suppression of epidermal growth factor (EGF)-induced MAPK8/JNK1 activation and subsequent JUN phosphorylation. Phosphorylates RIN1, inducing RIN1 binding to 14-3-3 proteins YWHAB, YWHAE and YWHAZ and increased competition with RAF1 for binding to GTP-bound form of Ras proteins (NRAS, HRAS and KRAS). Acts downstream of the heterotrimeric G-protein beta/gamma-subunit complex to maintain the structural integrity of the Golgi membranes, and is required for protein transport along the secretory pathway. In the trans-Golgi network (TGN), regulates the fission of transport vesicles that are on their way to the plasma membrane. May act by activating the lipid kinase phosphatidylinositol 4-kinase beta (PI4KB) at the TGN for the local synthesis of phosphorylated inositol lipids, which induces a sequential production of DAG, phosphatidic acid (PA) and lyso-PA (LPA) that are necessary for membrane fission and generation of specific transport carriers to the cell surface. Under oxidative stress, is phosphorylated at Tyr-469 via SRC-ABL1 and contributes to cell survival by activating IKK complex and subsequent nuclear translocation and activation of NFKB1. Involved in cell migration by regulating integrin alpha-5/beta-3 recycling and promoting its recruitment in newly forming focal adhesion. In osteoblast differentiation, mediates the bone morphogenetic protein 2 (BMP2)-induced nuclear export of HDAC7, which results in the inhibition of HDAC7 transcriptional repression of RUNX2. In neurons, plays an important role in neuronal polarity by regulating the biogenesis of TGN-derived dendritic vesicles, and is involved in the maintenance of dendritic arborization and Golgi structure in hippocampal cells. May potentiate mitogenesis induced by the neuropeptide bombesin or vasopressin by mediating an increase in the duration of MAPK1/3 (ERK1/2) signaling, which leads to accumulation of immediate-early gene products including FOS that stimulate cell cycle progression. Plays an important role in the proliferative response induced by low calcium in keratinocytes, through sustained activation of MAPK1/3 (ERK1/2) pathway. Downstream of novel PKC signaling, plays a role in cardiac hypertrophy by phosphorylating HDAC5, which in turn triggers XPO1/CRM1-dependent nuclear export of HDAC5, MEF2A transcriptional activation and induction of downstream target genes that promote myocyte hypertrophy and pathological cardiac remodeling. Mediates cardiac troponin I (TNNI3) phosphorylation at the PKA sites, which results in reduced myofilament calcium sensitivity, and accelerated crossbridge cycling kinetics. The PRKD1-HDAC5 pathway is also involved in angiogenesis by mediating VEGFA-induced specific subset of gene expression, cell migration, and tube formation. In response to VEGFA, is necessary and required for HDAC7 phosphorylation which induces HDAC7 nuclear export and endothelial cell proliferation and migration. During apoptosis induced by cytarabine and other genotoxic agents, PRKD1 is cleaved by caspase-3 at Asp-378, resulting in activation of its kinase function and increased sensitivity of cells to the cytotoxic effects of genotoxic agents. In epithelial cells, is required for transducing flagellin-stimulated inflammatory responses by binding and phosphorylating TLR5, which contributes to MAPK14/p38 activation and production of inflammatory cytokines. Acts as an activator of NLRP3 inflammasome assembly by mediating phosphorylation of NLRP3. May play a role in inflammatory response by mediating activation of NF-kappa-B. May be involved in pain transmission by directly modulating TRPV1 receptor. Plays a role in activated KRAS-mediated stabilization of ZNF304 in colorectal cancer (CRC) cells. Regulates nuclear translocation of transcription factor TFEB in macrophages upon live S.enterica infection. This is Serine/threonine-protein kinase D1 (Prkd1) from Rattus norvegicus (Rat).